The sequence spans 562 residues: Protein wntless (562 aa).

The Cytoplasmic portion of the chain corresponds to 1–15; that stretch reads MSGTILENLSGRKLS. A helical transmembrane segment spans residues 16–36; sequence ILVSSLMLCQVVCFLMGGLFA. Residues 37–239 lie on the Lumenal side of the membrane; that stretch reads PVPAGHQTVL…AIHQNGGFTQ (203 aa). N-linked (GlcNAc...) asparagine glycosylation is found at Asn-58 and Asn-103. A helical membrane pass occupies residues 240–260; it reads VWLVLKTLLFPFVIGIMMWFW. Residues 261-275 are Cytoplasmic-facing; the sequence is RRVHILQRSPALLEY. Residues 276 to 296 traverse the membrane as a helical segment; that stretch reads MLFYLGGALSFLNLPLELLTL. Over 297 to 311 the chain is Lumenal; it reads GVEMPYMLLLSDVRQ. The helical transmembrane segment at 312–332 threads the bilayer; that stretch reads GIFYAMLLSFWLVFAGEHMLI. The Cytoplasmic segment spans residues 333–344; it reads QDSPSKSTIRSR. A helical transmembrane segment spans residues 345 to 365; that stretch reads YWKHLSAVVVGCISLFVFDIC. The Lumenal segment spans residues 366–390; sequence ERGVQMRNPFYSIWTTPLGAKVAMS. The helical transmembrane segment at 391–411 threads the bilayer; sequence FIVLAGVSAAIYFLFLCFMVW. The Cytoplasmic portion of the chain corresponds to 412–441; the sequence is KVFKDIGDKRTSLPSMSQARRLHYEGLIYR. Residues 442–462 traverse the membrane as a helical segment; sequence FKFLMLATLLCAGLTVAGFIM. Over 463-482 the chain is Lumenal; that stretch reads GQMAEGHWKWNENIEIQLTS. A helical transmembrane segment spans residues 483 to 503; that stretch reads AFLTGVYGMWNIYIFALIILY. Topologically, residues 504–562 are cytoplasmic; sequence APSHKQWPTMRHSDETTQSNENIVASAASEEIEFSNLPSDSNPSEISSLTSFTRKVAFD.

The protein belongs to the wntless family. As to quaternary structure, interacts with wg; in the Golgi. Interacts with Vps35, a component of the retromer complex; wls stability is regulated by Vps35.

The protein localises to the presynaptic cell membrane. The protein resides in the postsynaptic cell membrane. Its subcellular location is the cell membrane. It is found in the endoplasmic reticulum membrane. It localises to the endosome membrane. The protein localises to the golgi apparatus membrane. Functionally, a segment polarity gene required for wingless (wg)-dependent patterning processes, acting in both wg-sending cells and wg-target cells. In non-neuronal cells wls directs wg secretion. The wls traffic loop encompasses the Golgi, the cell surface, an endocytic compartment and a retrograde route leading back to the Golgi, and involves clathrin-mediated endocytosis and the retromer complex (a conserved protein complex consisting of Vps35 and Vps26). In neuronal cells (the larval motorneuron NMJ), the wg signal moves across the synapse via the release of wls-containing exosome-like vesicles. Postsynaptic wls is required for the trafficking of fz2 through the fz2-interacting protein Grip. This is Protein wntless from Drosophila grimshawi (Hawaiian fruit fly).